We begin with the raw amino-acid sequence, 313 residues long: Acetaldehyde dehydrogenase (313 aa).

15-18 (SGNI) contacts NAD(+). The active-site Acyl-thioester intermediate is the Cys133. Residues 164–172 (SAGPGTRAN) and Asn289 contribute to the NAD(+) site.

It belongs to the acetaldehyde dehydrogenase family.

It catalyses the reaction acetaldehyde + NAD(+) + CoA = acetyl-CoA + NADH + H(+). This is Acetaldehyde dehydrogenase from Rhizobium rhizogenes (strain K84 / ATCC BAA-868) (Agrobacterium radiobacter).